The following is a 689-amino-acid chain: DNA topoisomerase 1 (689 aa).

The region spanning D3–I113 is the Toprim domain. E9 and D82 together coordinate Mg(2+). The region spanning E129–E557 is the Topo IA-type catalytic domain. The tract at residues S163 to Q168 is interaction with DNA. Y298 acts as the O-(5'-phospho-DNA)-tyrosine intermediate in catalysis. 3 consecutive C4-type zinc fingers follow at residues C577–C603, C617–C645, and C658–C681.

Belongs to the type IA topoisomerase family. In terms of assembly, monomer. Mg(2+) serves as cofactor.

It catalyses the reaction ATP-independent breakage of single-stranded DNA, followed by passage and rejoining.. Its function is as follows. Releases the supercoiling and torsional tension of DNA, which is introduced during the DNA replication and transcription, by transiently cleaving and rejoining one strand of the DNA duplex. Introduces a single-strand break via transesterification at a target site in duplex DNA. The scissile phosphodiester is attacked by the catalytic tyrosine of the enzyme, resulting in the formation of a DNA-(5'-phosphotyrosyl)-enzyme intermediate and the expulsion of a 3'-OH DNA strand. The free DNA strand then undergoes passage around the unbroken strand, thus removing DNA supercoils. Finally, in the religation step, the DNA 3'-OH attacks the covalent intermediate to expel the active-site tyrosine and restore the DNA phosphodiester backbone. This is DNA topoisomerase 1 from Staphylococcus epidermidis (strain ATCC 35984 / DSM 28319 / BCRC 17069 / CCUG 31568 / BM 3577 / RP62A).